The primary structure comprises 151 residues: Deoxyuridine 5'-triphosphate nucleotidohydrolase (151 aa).

Residues 70-72 (RSG), asparagine 83, 87-89 (LID), and methionine 97 contribute to the substrate site.

It belongs to the dUTPase family. Homotrimer. Requires Mg(2+) as cofactor.

It catalyses the reaction dUTP + H2O = dUMP + diphosphate + H(+). The protein operates within pyrimidine metabolism; dUMP biosynthesis; dUMP from dCTP (dUTP route): step 2/2. Its function is as follows. This enzyme is involved in nucleotide metabolism: it produces dUMP, the immediate precursor of thymidine nucleotides and it decreases the intracellular concentration of dUTP so that uracil cannot be incorporated into DNA. This chain is Deoxyuridine 5'-triphosphate nucleotidohydrolase, found in Escherichia fergusonii (strain ATCC 35469 / DSM 13698 / CCUG 18766 / IAM 14443 / JCM 21226 / LMG 7866 / NBRC 102419 / NCTC 12128 / CDC 0568-73).